The primary structure comprises 286 residues: 4-diphosphocytidyl-2-C-methyl-D-erythritol kinase (286 aa).

The active site involves K13. 99-109 contacts ATP; it reads PMGGGLGGGSS. D141 is an active-site residue.

The protein belongs to the GHMP kinase family. IspE subfamily.

The enzyme catalyses 4-CDP-2-C-methyl-D-erythritol + ATP = 4-CDP-2-C-methyl-D-erythritol 2-phosphate + ADP + H(+). It functions in the pathway isoprenoid biosynthesis; isopentenyl diphosphate biosynthesis via DXP pathway; isopentenyl diphosphate from 1-deoxy-D-xylulose 5-phosphate: step 3/6. Its function is as follows. Catalyzes the phosphorylation of the position 2 hydroxy group of 4-diphosphocytidyl-2C-methyl-D-erythritol. In Herminiimonas arsenicoxydans, this protein is 4-diphosphocytidyl-2-C-methyl-D-erythritol kinase.